Here is a 240-residue protein sequence, read N- to C-terminus: UDP-2,3-diacylglucosamine hydrolase (240 aa).

Mn(2+)-binding residues include Asp7, His9, Asp40, Asn78, and His113. Residue 78 to 79 (NR) coordinates substrate. Substrate contacts are provided by Asp121, Ser159, Thr163, Lys166, and His194. Positions 194 and 196 each coordinate Mn(2+).

The protein belongs to the LpxH family. Requires Mn(2+) as cofactor.

Its subcellular location is the cell inner membrane. It catalyses the reaction UDP-2-N,3-O-bis[(3R)-3-hydroxytetradecanoyl]-alpha-D-glucosamine + H2O = 2-N,3-O-bis[(3R)-3-hydroxytetradecanoyl]-alpha-D-glucosaminyl 1-phosphate + UMP + 2 H(+). It functions in the pathway glycolipid biosynthesis; lipid IV(A) biosynthesis; lipid IV(A) from (3R)-3-hydroxytetradecanoyl-[acyl-carrier-protein] and UDP-N-acetyl-alpha-D-glucosamine: step 4/6. Its function is as follows. Hydrolyzes the pyrophosphate bond of UDP-2,3-diacylglucosamine to yield 2,3-diacylglucosamine 1-phosphate (lipid X) and UMP by catalyzing the attack of water at the alpha-P atom. Involved in the biosynthesis of lipid A, a phosphorylated glycolipid that anchors the lipopolysaccharide to the outer membrane of the cell. The sequence is that of UDP-2,3-diacylglucosamine hydrolase from Stutzerimonas stutzeri (strain A1501) (Pseudomonas stutzeri).